The chain runs to 350 residues: GTPase Obg (350 aa).

Residues 1 to 158 (MFIDSVKITL…RLVRLELKLI (158 aa)) form the Obg domain. In terms of domain architecture, OBG-type G spans 159–339 (ADVGLVGFPN…LKFMLLEEIK (181 aa)). GTP is bound by residues 165-172 (GFPNVGKS), 190-194 (FTTLT), 212-215 (DIPG), 280-283 (SKSD), and 320-322 (SSL). 2 residues coordinate Mg(2+): Ser172 and Thr192.

The protein belongs to the TRAFAC class OBG-HflX-like GTPase superfamily. OBG GTPase family. In terms of assembly, monomer. It depends on Mg(2+) as a cofactor.

It localises to the cytoplasm. In terms of biological role, an essential GTPase which binds GTP, GDP and possibly (p)ppGpp with moderate affinity, with high nucleotide exchange rates and a fairly low GTP hydrolysis rate. Plays a role in control of the cell cycle, stress response, ribosome biogenesis and in those bacteria that undergo differentiation, in morphogenesis control. The chain is GTPase Obg from Campylobacter jejuni subsp. jejuni serotype O:2 (strain ATCC 700819 / NCTC 11168).